The sequence spans 365 residues: MNQIINDNYREFLKKLRERHLKKRKVKDKNKPIAVWMQDDIYRDFSIGKSLTIILRTEGCYYAKEGGCLMCSYLMDSSPEKITAENIINQFNYAIEKYKEKIKDLKDFSVKIFTSGSFLDDREVPKEARNYIFKKLSEFDNLKEVAIESRPEFIDEDKLNEIRKYLDVNVEIGVGIESFNEEIREKAINKGITNEQIIRAIELAKNYNIGIKAYLLIKPLFITEKEAIYDSISSANKCIELGCSRISFCPATVHKGSVMEFFFNKNQYRPPFLWSIIEILKEVKKSNPKALIMCDTSGVGSERGAHNLYNCKCNKLIKERLERFTLTQDINVLNVECECKNIWNAYIEVENKNIVPLGDERKLLL.

Residues 45–289 (FSIGKSLTII…LKEVKKSNPK (245 aa)) enclose the Radical SAM core domain. The [4Fe-4S] cluster site is built by cysteine 60, cysteine 68, and cysteine 71.

It depends on [4Fe-4S] cluster as a cofactor.

This is an uncharacterized protein from Methanocaldococcus jannaschii (strain ATCC 43067 / DSM 2661 / JAL-1 / JCM 10045 / NBRC 100440) (Methanococcus jannaschii).